Consider the following 226-residue polypeptide: Elongation factor 1-delta (226 aa).

The segment at 82–131 (SSVATPPVADTKASAAEDDDDDDVDLFGEETEEEKKASEERAAAVKASGK) is disordered. Positions 97 to 113 (AEDDDDDDVDLFGEETE) are enriched in acidic residues. Over residues 114-124 (EEKKASEERAA) the composition is skewed to basic and acidic residues.

It belongs to the EF-1-beta/EF-1-delta family. EF-1 is composed of 4 subunits: alpha, beta (1B-alpha=beta'), delta (1B-beta), and gamma (1B-gamma).

Functionally, EF-1-beta and EF-1-beta' stimulate the exchange of GDP bound to EF-1-alpha to GTP. This is Elongation factor 1-delta from Spuriopimpinella brachycarpa (Chamnamul).